Reading from the N-terminus, the 160-residue chain is Nuclear transcription factor Y subunit B-5 (160 aa).

The DNA-binding element occupies 56 to 62 (LPIANVG). A subunit association domain (SAD) region spans residues 83 to 94 (MQECVSEFISFV).

This sequence belongs to the NFYB/HAP3 subunit family. In terms of assembly, heterotrimeric transcription factor composed of three components, NF-YA, NF-YB and NF-YC. NF-YB and NF-YC must interact and dimerize for NF-YA association and DNA binding. In terms of tissue distribution, expressed in flowers and siliques.

The protein localises to the nucleus. Functionally, component of the NF-Y/HAP transcription factor complex. The NF-Y complex stimulates the transcription of various genes by recognizing and binding to a CCAAT motif in promoters. This is Nuclear transcription factor Y subunit B-5 (NFYB5) from Arabidopsis thaliana (Mouse-ear cress).